The primary structure comprises 350 residues: MNTRTDVTNDNIDKNPTKRGDRNIPGRNERFNDQNRFNNDRPRPKPRLQPNQPPKQDNKCREENGDFINIRLCAYEKEYCNDGYLSPAYYMLKQVDDEEMSCWSELSSLVRSRKAVGFPLLKAAKRISHGSMLYFEQLKNSKVVKLTPQVKCLNDTVIFQTVVILYSMYKRGIYSNEFCFDLVSIPRTNIVFSVNQLMFNICTDILVVLSICGNRLYRTNLPQSCYLNFIHGHETIARRGYEHSNYFFEWLIKNHISLLTKQTMDILKVKKKYATGAPVNRLLEPGTLVYVPKEDYYFIGISLTDVSISDNVRVLFSTDGIVLEIEDFNIKHLFMAGEMFVRSQSSTIIV.

Over residues 1–10 (MNTRTDVTND) the composition is skewed to polar residues. Positions 1–61 (MNTRTDVTND…QPPKQDNKCR (61 aa)) are disordered. Over residues 11–43 (NIDKNPTKRGDRNIPGRNERFNDQNRFNNDRPR) the composition is skewed to basic and acidic residues.

The protein belongs to the orthopoxvirus OPG097 family.

Its subcellular location is the virion. It localises to the host cytoplasm. Functionally, might be required to be present in the virion for transcription of early genes after primo infection. The chain is Protein OPG097 (OPG097) from Homo sapiens (Human).